A 68-amino-acid polypeptide reads, in one-letter code: Conotoxin ba14a (68 aa).

Residues methionine 1–glycine 20 form the signal peptide. A propeptide spanning residues leucine 21–arginine 50 is cleaved from the precursor.

Post-translationally, contains 2 disulfide bonds. Expressed by the venom duct.

It localises to the secreted. The polypeptide is Conotoxin ba14a (Conus bayani (Bayan's cone)).